We begin with the raw amino-acid sequence, 709 residues long: Polyribonucleotide nucleotidyltransferase (709 aa).

Mg(2+) is bound by residues D482 and D488. The region spanning 549-608 is the KH domain; it reads PRIITMSIDPDKIREVIGPGGKVINKIIAETGVKIDIEDDGRIFIAATDTEAANKAVRII. In terms of domain architecture, S1 motif spans 618-686; it reads GKVYTGKVTR…KQGRINLSRK (69 aa).

This sequence belongs to the polyribonucleotide nucleotidyltransferase family. Mg(2+) is required as a cofactor.

It is found in the cytoplasm. The catalysed reaction is RNA(n+1) + phosphate = RNA(n) + a ribonucleoside 5'-diphosphate. Involved in mRNA degradation. Catalyzes the phosphorolysis of single-stranded polyribonucleotides processively in the 3'- to 5'-direction. This chain is Polyribonucleotide nucleotidyltransferase, found in Heliobacterium modesticaldum (strain ATCC 51547 / Ice1).